The sequence spans 957 residues: Collagen alpha-1(I) chain (957 aa).

Residues 1 to 957 form a disordered region; that stretch reads GPMGPSGPRG…PGPPGPPGPP (957 aa). The span at 23–33 shows a compositional bias: low complexity; that stretch reads FPGEPGASGPM. The span at 45-59 shows a compositional bias: basic and acidic residues; the sequence is NGDDGEAGKPGRPGE. Serine 87 carries the phosphoserine modification. 2 stretches are compositionally biased toward low complexity: residues 95 to 113 and 125 to 138; these read DAGP…PRGI and PAGA…TGAA. Positions 140–152 are enriched in pro residues; it reads PPGPTGPAGPPGF. Low complexity-rich tracts occupy residues 186-210 and 219-228; these read AGAA…RGPS and SGPKGNSGEP. The segment covering 277–286 has biased composition (gly residues); it reads GERGGPGSRG. Composition is skewed to low complexity over residues 330–356, 365–384, 426–453, 488–516, 576–590, 603–618, 649–665, and 707–731; these read KGIT…QDGR, ARGQ…AGEP, QGPA…PGEQ, PRGA…QGAP, AGPS…ARGA, AGFA…PGAK, SAGP…AGRV, and AGEK…QGIA. Serine 579 is subject to Phosphoserine. Pro residues-rich tracts occupy residues 772-782 and 818-833; these read PPGPMGPPGIA and AGPP…PGPV. Residues 854 to 868 are compositionally biased toward low complexity; the sequence is IGPVGARGAAGPQGP. The segment covering 869–883 has biased composition (basic and acidic residues); the sequence is RGDKGETGEQGDRGI. Low complexity predominate over residues 902–935; that stretch reads PGEQGPSGASGPAGPRGPPGSAGSPGKDGINGIP. Over residues 937–957 the composition is skewed to pro residues; the sequence is PIGPPGPRPGPPGPPGPPGPP.

The protein belongs to the fibrillar collagen family. As to quaternary structure, trimers of one alpha 2(I) and two alpha 1(I) chains. Prolines at the third position of the tripeptide repeating unit (G-X-Y) are hydroxylated in some or all of the chains. As to expression, forms the fibrils of tendon, ligaments and bones. In bones, the fibrils are mineralized with calcium hydroxyapatite.

It localises to the secreted. Its subcellular location is the extracellular space. It is found in the extracellular matrix. Functionally, type I collagen is a member of group I collagen (fibrillar forming collagen). The chain is Collagen alpha-1(I) chain from Hippopotamus amphibius (Hippopotamus).